Reading from the N-terminus, the 393-residue chain is Formate-dependent phosphoribosylglycinamide formyltransferase (393 aa).

N(1)-(5-phospho-beta-D-ribosyl)glycinamide contacts are provided by residues 22–23 (EL) and Glu-82. Residues Arg-114, Lys-155, 160–165 (SSGKGQ), 195–198 (EGFI), and Glu-203 each bind ATP. The 190-residue stretch at 119-308 (RLAAEELGLP…EFALHARAIL (190 aa)) folds into the ATP-grasp domain. Residues Glu-267 and Glu-279 each coordinate Mg(2+). N(1)-(5-phospho-beta-D-ribosyl)glycinamide is bound by residues Asp-286, Lys-356, and 363–364 (RR).

This sequence belongs to the PurK/PurT family. As to quaternary structure, homodimer.

It carries out the reaction N(1)-(5-phospho-beta-D-ribosyl)glycinamide + formate + ATP = N(2)-formyl-N(1)-(5-phospho-beta-D-ribosyl)glycinamide + ADP + phosphate + H(+). Its pathway is purine metabolism; IMP biosynthesis via de novo pathway; N(2)-formyl-N(1)-(5-phospho-D-ribosyl)glycinamide from N(1)-(5-phospho-D-ribosyl)glycinamide (formate route): step 1/1. In terms of biological role, involved in the de novo purine biosynthesis. Catalyzes the transfer of formate to 5-phospho-ribosyl-glycinamide (GAR), producing 5-phospho-ribosyl-N-formylglycinamide (FGAR). Formate is provided by PurU via hydrolysis of 10-formyl-tetrahydrofolate. The polypeptide is Formate-dependent phosphoribosylglycinamide formyltransferase (Azotobacter vinelandii (strain DJ / ATCC BAA-1303)).